The sequence spans 191 residues: uncharacterized protein (191 aa).

This is an uncharacterized protein from Agrobacterium tumefaciens (strain Ach5).